Here is a 640-residue protein sequence, read N- to C-terminus: UvrABC system protein C (640 aa).

Residues 35–113 enclose the GIY-YIG domain; sequence DAPGVYRMIG…IKQLKPRFNV (79 aa). The region spanning 223–258 is the UVR domain; the sequence is RAVMATMAKAMEEAAEELEFERAARLRDRIRALSAV.

This sequence belongs to the UvrC family. In terms of assembly, interacts with UvrB in an incision complex.

Its subcellular location is the cytoplasm. Its function is as follows. The UvrABC repair system catalyzes the recognition and processing of DNA lesions. UvrC both incises the 5' and 3' sides of the lesion. The N-terminal half is responsible for the 3' incision and the C-terminal half is responsible for the 5' incision. This Caulobacter vibrioides (strain ATCC 19089 / CIP 103742 / CB 15) (Caulobacter crescentus) protein is UvrABC system protein C.